The following is a 223-amino-acid chain: Endonuclease NucS (223 aa).

Belongs to the NucS endonuclease family.

Its subcellular location is the cytoplasm. Functionally, cleaves both 3' and 5' ssDNA extremities of branched DNA structures. The chain is Endonuclease NucS from Streptomyces avermitilis (strain ATCC 31267 / DSM 46492 / JCM 5070 / NBRC 14893 / NCIMB 12804 / NRRL 8165 / MA-4680).